The following is a 150-amino-acid chain: Ribonuclease H (150 aa).

Positions 7–148 constitute an RNase H type-1 domain; that stretch reads ERPRVEIWTD…VDQLATRGRE (142 aa). Asp16, Glu54, Asp76, and Asp140 together coordinate Mg(2+).

This sequence belongs to the RNase H family. In terms of assembly, monomer. Mg(2+) is required as a cofactor.

It is found in the cytoplasm. The enzyme catalyses Endonucleolytic cleavage to 5'-phosphomonoester.. Its function is as follows. Endonuclease that specifically degrades the RNA of RNA-DNA hybrids. The polypeptide is Ribonuclease H (Gluconobacter oxydans (strain 621H) (Gluconobacter suboxydans)).